The following is a 295-amino-acid chain: ER-localized J domain-containing protein 5 (295 aa).

The first 20 residues, 1–20, serve as a signal peptide directing secretion; sequence MNGYWKPALVVLGLVSLSYA. At 21–130 the chain is on the lumenal side; sequence FTTIETEIFQ…GFYFSRMKPK (110 aa). The J domain maps to 42–110; that stretch reads DMNFYKFLKL…RKIYDYYLQN (69 aa). A helical membrane pass occupies residues 131-151; that stretch reads TWFLLAFIWIVVNIGQYIISI. The Cytoplasmic segment spans residues 152–295; it reads IQYRSQRSRI…PNGKVIYSRK (144 aa). The interval 259–287 is disordered; that stretch reads KYDGNQTKKGNKVKKGSAKKGQKKMELPN. A compositionally biased stretch (basic residues) spans 267–280; that stretch reads KGNKVKKGSAKKGQ.

This sequence belongs to the DnaJ family.

Its subcellular location is the endoplasmic reticulum membrane. In terms of biological role, dnaJ-like chaperone required for the folding capacity of the endoplasmic reticulum. This chain is ER-localized J domain-containing protein 5 (ERJ5), found in Saccharomyces cerevisiae (strain ATCC 204508 / S288c) (Baker's yeast).